Here is a 215-residue protein sequence, read N- to C-terminus: Endonuclease III (215 aa).

The region spanning 113-132 (REDLESLPGVGRKTANVILN) is the HhH domain. [4Fe-4S] cluster-binding residues include C192, C199, C202, and C208.

The protein belongs to the Nth/MutY family. It depends on [4Fe-4S] cluster as a cofactor.

It catalyses the reaction 2'-deoxyribonucleotide-(2'-deoxyribose 5'-phosphate)-2'-deoxyribonucleotide-DNA = a 3'-end 2'-deoxyribonucleotide-(2,3-dehydro-2,3-deoxyribose 5'-phosphate)-DNA + a 5'-end 5'-phospho-2'-deoxyribonucleoside-DNA + H(+). DNA repair enzyme that has both DNA N-glycosylase activity and AP-lyase activity. The DNA N-glycosylase activity releases various damaged pyrimidines from DNA by cleaving the N-glycosidic bond, leaving an AP (apurinic/apyrimidinic) site. The AP-lyase activity cleaves the phosphodiester bond 3' to the AP site by a beta-elimination, leaving a 3'-terminal unsaturated sugar and a product with a terminal 5'-phosphate. The polypeptide is Endonuclease III (Buchnera aphidicola subsp. Baizongia pistaciae (strain Bp)).